Here is a 248-residue protein sequence, read N- to C-terminus: tRNA uridine(34) hydroxylase (248 aa).

Residues 127–221 (RGRPLVLLDT…YFEEVGGEGY (95 aa)) form the Rhodanese domain. Cys181 acts as the Cysteine persulfide intermediate in catalysis.

The protein belongs to the TrhO family.

It carries out the reaction uridine(34) in tRNA + AH2 + O2 = 5-hydroxyuridine(34) in tRNA + A + H2O. In terms of biological role, catalyzes oxygen-dependent 5-hydroxyuridine (ho5U) modification at position 34 in tRNAs. This is tRNA uridine(34) hydroxylase from Xanthomonas axonopodis pv. citri (strain 306).